Here is a 148-residue protein sequence, read N- to C-terminus: Glutamyl-tRNA(Gln) amidotransferase subunit C, mitochondrial (148 aa).

The protein belongs to the GatC family. As to quaternary structure, subunit of the heterotrimeric GatCAB amidotransferase (AdT) complex, composed of A, B and C subunits.

It localises to the mitochondrion. The enzyme catalyses L-glutamyl-tRNA(Gln) + L-glutamine + ATP + H2O = L-glutaminyl-tRNA(Gln) + L-glutamate + ADP + phosphate + H(+). Functionally, allows the formation of correctly charged Gln-tRNA(Gln) through the transamidation of misacylated Glu-tRNA(Gln) in the mitochondria. The reaction takes place in the presence of glutamine and ATP through an activated gamma-phospho-Glu-tRNA(Gln). This chain is Glutamyl-tRNA(Gln) amidotransferase subunit C, mitochondrial, found in Drosophila yakuba (Fruit fly).